The sequence spans 136 residues: DNA-directed RNA polymerase subunit omega (136 aa).

It belongs to the RNA polymerase subunit omega family. In terms of assembly, the RNAP catalytic core consists of 2 alpha, 1 beta, 1 beta' and 1 omega subunit. When a sigma factor is associated with the core the holoenzyme is formed, which can initiate transcription.

It carries out the reaction RNA(n) + a ribonucleoside 5'-triphosphate = RNA(n+1) + diphosphate. Promotes RNA polymerase assembly. Latches the N- and C-terminal regions of the beta' subunit thereby facilitating its interaction with the beta and alpha subunits. The protein is DNA-directed RNA polymerase subunit omega of Methylorubrum extorquens (strain CM4 / NCIMB 13688) (Methylobacterium extorquens).